Here is a 455-residue protein sequence, read N- to C-terminus: Guanine/hypoxanthine permease GhxQ (455 aa).

At 1-31 the chain is on the cytoplasmic side; sequence MSGDILQTPDAPKPQGALDNYFKITARGSTV. Residues 32-55 form a helical membrane-spanning segment; it reads RQEVLAGLTTFLAMVYSVIVVPGM. Over 56-65 the chain is Periplasmic; sequence LGKAGFPPAA. Residues 66–84 traverse the membrane as a helical segment; that stretch reads VFVATCLVAGFGSLLMGLW. Residues 85-86 lie on the Cytoplasmic side of the membrane; it reads AN. A discontinuously helical transmembrane segment spans residues 87–103; it reads LPMAIGCAISLTAFTAF. At 104–115 the chain is on the periplasmic side; it reads SLVLGQQISVPV. A helical membrane pass occupies residues 116 to 135; the sequence is ALGAVFLMGVIFTAISVTGV. Topologically, residues 136-147 are cytoplasmic; it reads RTWILRNLPMGI. A helical membrane pass occupies residues 148–168; sequence AHGTGIGIGLFLLLIAANGVG. Residues 169–186 lie on the Periplasmic side of the membrane; sequence MVIKNPIEGLPVALGAFT. A helical transmembrane segment spans residues 187–204; that stretch reads SFPVMMSLLGLAVIFGLE. At 205-208 the chain is on the cytoplasmic side; sequence KCRV. Residues 209-228 form a helical membrane-spanning segment; the sequence is PGGILLVIIAISIIGLIFDP. Residues 229–260 lie on the Periplasmic side of the membrane; the sequence is AVKYHGLVAMPSLTGEDGKSLIFSLDIMGALQ. Residues 261–289 form a helical membrane-spanning segment; sequence PTVLPSVLALVMTAVFDATGTIRAVAGQA. Over 290–302 the chain is Cytoplasmic; it reads NLLDKDNQIINGG. The helical transmembrane segment at 303-318 threads the bilayer; it reads KALTSDSVSSIFSGLV. The Periplasmic portion of the chain corresponds to 319–320; sequence GA. A discontinuously helical membrane pass occupies residues 321–336; sequence APAAVYIESAAGTAAG. Topologically, residues 337-340 are cytoplasmic; that stretch reads GKTG. The helical transmembrane segment at 341–355 threads the bilayer; sequence LTATVVGALFLLILF. At 356–366 the chain is on the periplasmic side; the sequence is LSPLSFLIPGY. The helical transmembrane segment at 367 to 386 threads the bilayer; sequence ATAPALMYVGLLMLSNVSKL. Topologically, residues 387–391 are cytoplasmic; sequence DFNDF. The discontinuously helical intramembrane region spans 392 to 427; it reads IDAMAGLVCAVFIVLTCNIVTGIMLGFVTLVVGRVF. The Cytoplasmic portion of the chain corresponds to 428-455; it reads AREWQKLNIGTVIITAALVAFYAGGWAI.

This sequence belongs to the nucleobase:cation symporter-2 (NCS2) (TC 2.A.40) family. Azg-like subfamily.

The protein localises to the cell membrane. In terms of biological role, high-affinity transporter for guanine and hypoxanthine. The polypeptide is Guanine/hypoxanthine permease GhxQ (ghxQ) (Escherichia coli (strain K12)).